A 213-amino-acid chain; its full sequence is MQASLTQALNGLRVSRETVQKLEHFASLFQKWARSINLVAPSTLEDLWRRHILDSLQLYQLSPGPKTWVDLGSGGGFPGVITAICLSEAEGGWVHLVESNNKKAAFLRVALRETGARGSVHPIRIEAAPAEIPSCDAISARALADLSQLLDYCAPWMLAEGSGTVAFFHKGRDYQQEVDKAVSRFQFDLIKHASVVEPDSVVLEIANLSRRTK.

Residues G72, F77, 125-126 (IE), and R141 contribute to the S-adenosyl-L-methionine site.

This sequence belongs to the methyltransferase superfamily. RNA methyltransferase RsmG family.

The protein localises to the cytoplasm. The enzyme catalyses guanosine(527) in 16S rRNA + S-adenosyl-L-methionine = N(7)-methylguanosine(527) in 16S rRNA + S-adenosyl-L-homocysteine. Its function is as follows. Specifically methylates the N7 position of guanine in position 527 of 16S rRNA. The sequence is that of Ribosomal RNA small subunit methyltransferase G from Rhizobium meliloti (strain 1021) (Ensifer meliloti).